The sequence spans 219 residues: Redox-sensing transcriptional repressor Rex (219 aa).

The H-T-H motif DNA-binding region spans 18 to 57 (LYYRFIQSLYNSGKLRVSSAELSEAVKVDSATIRRDFSYF). Position 92 to 97 (92 to 97 (GVGHLG)) interacts with NAD(+).

The protein belongs to the transcriptional regulatory Rex family. In terms of assembly, homodimer.

It is found in the cytoplasm. Modulates transcription in response to changes in cellular NADH/NAD(+) redox state. In Exiguobacterium sibiricum (strain DSM 17290 / CCUG 55495 / CIP 109462 / JCM 13490 / 255-15), this protein is Redox-sensing transcriptional repressor Rex.